A 468-amino-acid chain; its full sequence is Probable Xaa-Pro aminopeptidase PEPP (468 aa).

Asp-264, Asp-275, Glu-398, and Glu-438 together coordinate Mn(2+).

The protein belongs to the peptidase M24B family. It depends on Mn(2+) as a cofactor.

It carries out the reaction Release of any N-terminal amino acid, including proline, that is linked to proline, even from a dipeptide or tripeptide.. Catalyzes the removal of a penultimate prolyl residue from the N-termini of peptides. This is Probable Xaa-Pro aminopeptidase PEPP (PEPP) from Paracoccidioides lutzii (strain ATCC MYA-826 / Pb01) (Paracoccidioides brasiliensis).